An 89-amino-acid polypeptide reads, in one-letter code: Small ribosomal subunit protein uS15 (89 aa).

This sequence belongs to the universal ribosomal protein uS15 family. As to quaternary structure, part of the 30S ribosomal subunit. Forms a bridge to the 50S subunit in the 70S ribosome, contacting the 23S rRNA.

One of the primary rRNA binding proteins, it binds directly to 16S rRNA where it helps nucleate assembly of the platform of the 30S subunit by binding and bridging several RNA helices of the 16S rRNA. Functionally, forms an intersubunit bridge (bridge B4) with the 23S rRNA of the 50S subunit in the ribosome. The chain is Small ribosomal subunit protein uS15 from Baumannia cicadellinicola subsp. Homalodisca coagulata.